The following is a 346-amino-acid chain: UDP-3-O-acylglucosamine N-acyltransferase (346 aa).

Residue H253 is the Proton acceptor of the active site.

This sequence belongs to the transferase hexapeptide repeat family. LpxD subfamily. As to quaternary structure, homotrimer.

The catalysed reaction is a UDP-3-O-[(3R)-3-hydroxyacyl]-alpha-D-glucosamine + a (3R)-hydroxyacyl-[ACP] = a UDP-2-N,3-O-bis[(3R)-3-hydroxyacyl]-alpha-D-glucosamine + holo-[ACP] + H(+). It functions in the pathway bacterial outer membrane biogenesis; LPS lipid A biosynthesis. Functionally, catalyzes the N-acylation of UDP-3-O-acylglucosamine using 3-hydroxyacyl-ACP as the acyl donor. Is involved in the biosynthesis of lipid A, a phosphorylated glycolipid that anchors the lipopolysaccharide to the outer membrane of the cell. The protein is UDP-3-O-acylglucosamine N-acyltransferase of Rickettsia conorii (strain ATCC VR-613 / Malish 7).